We begin with the raw amino-acid sequence, 310 residues long: Glutaminase (310 aa).

Substrate is bound by residues Ser66, Asn117, Glu161, Asn168, Tyr192, Tyr244, and Val262. Lys294 is subject to N6-acetyllysine.

Belongs to the glutaminase family. As to quaternary structure, homotetramer.

It catalyses the reaction L-glutamine + H2O = L-glutamate + NH4(+). The sequence is that of Glutaminase from Escherichia coli O81 (strain ED1a).